A 234-amino-acid polypeptide reads, in one-letter code: 2-C-methyl-D-erythritol 4-phosphate cytidylyltransferase (234 aa).

Belongs to the IspD/TarI cytidylyltransferase family. IspD subfamily.

It carries out the reaction 2-C-methyl-D-erythritol 4-phosphate + CTP + H(+) = 4-CDP-2-C-methyl-D-erythritol + diphosphate. The protein operates within isoprenoid biosynthesis; isopentenyl diphosphate biosynthesis via DXP pathway; isopentenyl diphosphate from 1-deoxy-D-xylulose 5-phosphate: step 2/6. In terms of biological role, catalyzes the formation of 4-diphosphocytidyl-2-C-methyl-D-erythritol from CTP and 2-C-methyl-D-erythritol 4-phosphate (MEP). This chain is 2-C-methyl-D-erythritol 4-phosphate cytidylyltransferase, found in Pseudomonas aeruginosa (strain ATCC 15692 / DSM 22644 / CIP 104116 / JCM 14847 / LMG 12228 / 1C / PRS 101 / PAO1).